Here is a 289-residue protein sequence, read N- to C-terminus: Acetyl-coenzyme A carboxylase carboxyl transferase subunit beta (289 aa).

The 263-residue stretch at 27-289 (LWSKCPSCES…SFMRVPAGAA (263 aa)) folds into the CoA carboxyltransferase N-terminal domain. 4 residues coordinate Zn(2+): C31, C34, C50, and C53. A C4-type zinc finger spans residues 31-53 (CPSCESVLYRTDLESNSEVCPKC).

It belongs to the AccD/PCCB family. As to quaternary structure, acetyl-CoA carboxylase is a heterohexamer composed of biotin carboxyl carrier protein (AccB), biotin carboxylase (AccC) and two subunits each of ACCase subunit alpha (AccA) and ACCase subunit beta (AccD). Zn(2+) is required as a cofactor.

Its subcellular location is the cytoplasm. It carries out the reaction N(6)-carboxybiotinyl-L-lysyl-[protein] + acetyl-CoA = N(6)-biotinyl-L-lysyl-[protein] + malonyl-CoA. It participates in lipid metabolism; malonyl-CoA biosynthesis; malonyl-CoA from acetyl-CoA: step 1/1. Functionally, component of the acetyl coenzyme A carboxylase (ACC) complex. Biotin carboxylase (BC) catalyzes the carboxylation of biotin on its carrier protein (BCCP) and then the CO(2) group is transferred by the transcarboxylase to acetyl-CoA to form malonyl-CoA. In Methylobacillus flagellatus (strain ATCC 51484 / DSM 6875 / VKM B-1610 / KT), this protein is Acetyl-coenzyme A carboxylase carboxyl transferase subunit beta.